The chain runs to 758 residues: Spastin (758 aa).

Positions 1-103 (MVRTKNQSSS…SPRSGHHHSY (103 aa)) are disordered. Over 1 to 121 (MVRTKNQSSS…KQNLYVVSFP (121 aa)) the chain is Cytoplasmic. The tract at residues 1 to 210 (MVRTKNQSSS…RPIQPLEMAA (210 aa)) is required for localization to punctate cytoplasmic foci. 4 stretches are compositionally biased toward low complexity: residues 8–28 (SSSSSASSSSTKSPIKSSSGA), 43–58 (RSSSASNVAAVVAGGS), 66–76 (SSNRRSPGSSP), and 85–95 (TDDLTPTTCSP). The helical intramembrane region spans 122–142 (IIFLFNVLRSLIYQLFCIFRY). The Cytoplasmic portion of the chain corresponds to 143–758 (LYGASTKVIY…WSQDYGDITI (616 aa)). Composition is skewed to polar residues over residues 169–180 (SKEQQQSLNHPS) and 189–198 (QEQQLSNQPQ). Residues 169-202 (SKEQQQSLNHPSELNREGDGQEQQLSNQPQRFRP) are disordered. The sufficient for interaction with microtubules and microtubule severing stretch occupies residues 208–758 (MAANRPGGGY…WSQDYGDITI (551 aa)). An MIT domain is found at 233–308 (HRRAFEYISK…SMARDRLHFL (76 aa)). The tract at residues 353-454 (RVRSSGYGPK…GPSGSGASTP (102 aa)) is disordered. 2 stretches are compositionally biased toward polar residues: residues 390-406 (NKSQTLPRNLGSKTSVG) and 425-454 (QFSSGRNTPPQRSRTPINNNGPSGSGASTP). A required for interaction with microtubules region spans residues 443–455 (NNGPSGSGASTPV). 523-530 (GPPGNGKT) is an ATP binding site.

Belongs to the AAA ATPase family. Spastin subfamily. Homohexamer. The homohexamer is stabilized by ATP-binding. The homohexamer may adopt a ring conformation through which microtubules pass prior to being severed. Interacts with microtubules. Interacts with atl; may be involved in microtubule dynamics.

It localises to the membrane. Its subcellular location is the cytoplasm. The protein resides in the cytoskeleton. It is found in the microtubule organizing center. The protein localises to the centrosome. It localises to the chromosome. Its subcellular location is the lipid droplet. The enzyme catalyses n ATP + n H2O + a microtubule = n ADP + n phosphate + (n+1) alpha/beta tubulin heterodimers.. In terms of biological role, ATP-dependent microtubule severing protein. Stimulates microtubule minus-end depolymerization and poleward microtubule flux in the mitotic spindle. Regulates microtubule stability in the neuromuscular junction synapse. Involved in lipid metabolism by regulating the size and distribution of lipid droplets. Involved in axon regeneration by regulating microtubule severing. This is Spastin from Drosophila sechellia (Fruit fly).